Consider the following 63-residue polypeptide: Cytochrome c oxidase subunit 5C (63 aa).

The helical transmembrane segment at 16-34 threads the bilayer; the sequence is VVKEICIGLTLGLVAGGLW.

This sequence belongs to the cytochrome c oxidase subunit 5C family.

It is found in the mitochondrion inner membrane. This protein is one of the nuclear-coded polypeptide chains of cytochrome c oxidase, the terminal oxidase in mitochondrial electron transport. This Oryza sativa subsp. japonica (Rice) protein is Cytochrome c oxidase subunit 5C (COX5C).